The primary structure comprises 105 residues: Nucleoid-associated protein SSP2277 (105 aa).

A disordered region spans residues 1 to 41 (MRGGGNMQQMMKQMQKMQKKMGEEQEKLKEEKVQGTAGGGM). Over residues 7–16 (MQQMMKQMQK) the composition is skewed to low complexity. Residues 20–33 (KMGEEQEKLKEEKV) show a composition bias toward basic and acidic residues.

This sequence belongs to the YbaB/EbfC family. As to quaternary structure, homodimer.

The protein localises to the cytoplasm. The protein resides in the nucleoid. Its function is as follows. Binds to DNA and alters its conformation. May be involved in regulation of gene expression, nucleoid organization and DNA protection. This Staphylococcus saprophyticus subsp. saprophyticus (strain ATCC 15305 / DSM 20229 / NCIMB 8711 / NCTC 7292 / S-41) protein is Nucleoid-associated protein SSP2277.